A 452-amino-acid chain; its full sequence is Methionine aminopeptidase 2-1 (452 aa).

The interval 1-100 (MAAKVADDVA…VRIDEVFPND (100 aa)) is disordered. The span at 37 to 51 (EHDDSDDDNEAEDGA) shows a compositional bias: acidic residues. Over residues 60–73 (KKKKKRKPRKKKKA) the composition is skewed to basic residues. Residue histidine 205 participates in substrate binding. A divalent metal cation-binding residues include aspartate 225, aspartate 236, and histidine 305. Histidine 313 is a binding site for substrate. 2 residues coordinate a divalent metal cation: glutamate 338 and glutamate 433.

This sequence belongs to the peptidase M24A family. Methionine aminopeptidase eukaryotic type 2 subfamily. The cofactor is Co(2+). It depends on Zn(2+) as a cofactor. Requires Mn(2+) as cofactor. Fe(2+) serves as cofactor.

The protein resides in the cytoplasm. It catalyses the reaction Release of N-terminal amino acids, preferentially methionine, from peptides and arylamides.. Functionally, cotranslationally removes the N-terminal methionine from nascent proteins. The N-terminal methionine is often cleaved when the second residue in the primary sequence is small and uncharged (Met-Ala-, Cys, Gly, Pro, Ser, Thr, or Val). This is Methionine aminopeptidase 2-1 from Pyrenophora teres f. teres (strain 0-1) (Barley net blotch fungus).